A 301-amino-acid chain; its full sequence is Peroxisome assembly protein 26 (301 aa).

The Cytoplasmic portion of the chain corresponds to 1–246 (MKNDSSTSAA…DAAASHLLSQ (246 aa)). A helical; Signal-anchor for type II membrane protein membrane pass occupies residues 247-263 (PFKKSLLAALILCLLVL). Residues 264-301 (RFDPATPSSLPFLYQLAHLFRRIQKATLSRLYPLALRD) are Peroxisomal-facing.

This sequence belongs to the peroxin-26 family. In terms of assembly, interacts directly with PEX6 via its cytoplasmic domain. Interacts indirectly with PEX1, via its interaction with PEX6.

The protein resides in the peroxisome membrane. Its function is as follows. Peroxisomal docking factor that anchors PEX1 and PEX6 to peroxisome membranes. It is therefore required for the formation of the PEX1-PEX6 AAA ATPase complex, a complex that mediates the extraction of the PEX5 receptor from peroxisomal membrane. In Cricetulus griseus (Chinese hamster), this protein is Peroxisome assembly protein 26 (Pex26).